A 247-amino-acid polypeptide reads, in one-letter code: MMERAEDLRLSLSLSSPLIAPRTHHVAMLFHAPPEKRFLEMPLLPAAKRSEVVAAEEERAGLRGGGGSDEEDGGCGIDGSRKKLRLSKDQSAVLEDSFREHPTLNPRQKATLAQQLGLRPRQVEVWFQNRRARTKLKQTEVDCEFLKRCCETLTEENRRLQKEVQELRALKLVSPHLYMNMSPPTTLTMCPSCERVSNTNNNSSAAAAADRRGIRTTTAAGGGSVVDTAADGGILCHRPIAVRPQQS.

The segment at 58 to 81 (ERAGLRGGGGSDEEDGGCGIDGSR) is disordered. The homeobox DNA-binding region spans 79 to 138 (GSRKKLRLSKDQSAVLEDSFREHPTLNPRQKATLAQQLGLRPRQVEVWFQNRRARTKLKQ). The interval 137–182 (KQTEVDCEFLKRCCETLTEENRRLQKEVQELRALKLVSPHLYMNMS) is leucine-zipper.

It belongs to the HD-ZIP homeobox family. Class II subfamily. As to expression, expressed in seedlings, roots, stems, leaf sheaths and blades and panicles.

It localises to the nucleus. In terms of biological role, probable transcription factor. The protein is Homeobox-leucine zipper protein HOX17 (HOX17) of Oryza sativa subsp. japonica (Rice).